A 167-amino-acid chain; its full sequence is Small ribosomal subunit protein uS9 (167 aa).

The tract at residues 1 to 41 is disordered; sequence MNTEAVAPDVAEEEVLTSYTSESSASADDAPKKERPALTVS. The segment covering 17-26 has biased composition (polar residues); the sequence is TSYTSESSAS.

It belongs to the universal ribosomal protein uS9 family.

In Renibacterium salmoninarum (strain ATCC 33209 / DSM 20767 / JCM 11484 / NBRC 15589 / NCIMB 2235), this protein is Small ribosomal subunit protein uS9.